The chain runs to 428 residues: Immunoglobulin superfamily containing leucine-rich repeat protein (428 aa).

The N-terminal stretch at Met1–Ala18 is a signal peptide. In terms of domain architecture, LRRNT spans Cys19–Ala50. Asn51 carries an N-linked (GlcNAc...) asparagine glycan. LRR repeat units follow at residues Asn51 to Glu72, Leu75 to Ser96, His99 to Ser122, Ala123 to Ser144, and Ala147 to Pro168. Residues Asn180–Ala231 enclose the LRRCT domain. One can recognise an Ig-like domain in the interval Pro232–Ala343. Cys257 and Cys327 form a disulfide bridge. Residue Asn309 is glycosylated (N-linked (GlcNAc...) asparagine).

Expressed in various tissues including retina, heart, skeletal muscle, prostate, ovary, small intestine, thyroid, adrenal cortex, testis, stomach and spinal cord.

The protein resides in the secreted. This is Immunoglobulin superfamily containing leucine-rich repeat protein (ISLR) from Homo sapiens (Human).